Consider the following 230-residue polypeptide: Cytochrome c oxidase subunit 2 (230 aa).

At 1 to 14 (MAHPSQLGFQDAAS) the chain is on the mitochondrial intermembrane side. Residues 15–45 (PVMEELLHFHDHALMIVLLISTLVLYIIVAM) traverse the membrane as a helical segment. The Mitochondrial matrix portion of the chain corresponds to 46-59 (VSTKLTNMYILDSQ). Residues 60-87 (EIEIVWTVLPAVILILIALPSLRILYLM) traverse the membrane as a helical segment. Over 88-230 (DEINDPHLTI…KWSTMMLEDA (143 aa)) the chain is Mitochondrial intermembrane. Residues H161, C196, E198, C200, H204, and M207 each contribute to the Cu cation site. E198 contributes to the Mg(2+) binding site.

This sequence belongs to the cytochrome c oxidase subunit 2 family. Component of the cytochrome c oxidase (complex IV, CIV), a multisubunit enzyme composed of 14 subunits. The complex is composed of a catalytic core of 3 subunits MT-CO1, MT-CO2 and MT-CO3, encoded in the mitochondrial DNA, and 11 supernumerary subunits COX4I, COX5A, COX5B, COX6A, COX6B, COX6C, COX7A, COX7B, COX7C, COX8 and NDUFA4, which are encoded in the nuclear genome. The complex exists as a monomer or a dimer and forms supercomplexes (SCs) in the inner mitochondrial membrane with NADH-ubiquinone oxidoreductase (complex I, CI) and ubiquinol-cytochrome c oxidoreductase (cytochrome b-c1 complex, complex III, CIII), resulting in different assemblies (supercomplex SCI(1)III(2)IV(1) and megacomplex MCI(2)III(2)IV(2)). Found in a complex with TMEM177, COA6, COX18, COX20, SCO1 and SCO2. Interacts with TMEM177 in a COX20-dependent manner. Interacts with COX20. Interacts with COX16. It depends on Cu cation as a cofactor.

It localises to the mitochondrion inner membrane. It catalyses the reaction 4 Fe(II)-[cytochrome c] + O2 + 8 H(+)(in) = 4 Fe(III)-[cytochrome c] + 2 H2O + 4 H(+)(out). Functionally, component of the cytochrome c oxidase, the last enzyme in the mitochondrial electron transport chain which drives oxidative phosphorylation. The respiratory chain contains 3 multisubunit complexes succinate dehydrogenase (complex II, CII), ubiquinol-cytochrome c oxidoreductase (cytochrome b-c1 complex, complex III, CIII) and cytochrome c oxidase (complex IV, CIV), that cooperate to transfer electrons derived from NADH and succinate to molecular oxygen, creating an electrochemical gradient over the inner membrane that drives transmembrane transport and the ATP synthase. Cytochrome c oxidase is the component of the respiratory chain that catalyzes the reduction of oxygen to water. Electrons originating from reduced cytochrome c in the intermembrane space (IMS) are transferred via the dinuclear copper A center (CU(A)) of subunit 2 and heme A of subunit 1 to the active site in subunit 1, a binuclear center (BNC) formed by heme A3 and copper B (CU(B)). The BNC reduces molecular oxygen to 2 water molecules using 4 electrons from cytochrome c in the IMS and 4 protons from the mitochondrial matrix. The sequence is that of Cytochrome c oxidase subunit 2 (mt-co2) from Oncorhynchus mykiss (Rainbow trout).